Here is a 193-residue protein sequence, read N- to C-terminus: Non-canonical purine NTP pyrophosphatase homolog (193 aa).

Belongs to the HAM1 NTPase family.

The polypeptide is Non-canonical purine NTP pyrophosphatase homolog (Halalkalibacterium halodurans (strain ATCC BAA-125 / DSM 18197 / FERM 7344 / JCM 9153 / C-125) (Bacillus halodurans)).